A 231-amino-acid chain; its full sequence is 7-cyano-7-deazaguanine synthase (231 aa).

Residue 8–18 participates in ATP binding; the sequence is FSGGQDSTTCL. 4 residues coordinate Zn(2+): C187, C196, C199, and C202.

The protein belongs to the QueC family. Requires Zn(2+) as cofactor.

The catalysed reaction is 7-carboxy-7-deazaguanine + NH4(+) + ATP = 7-cyano-7-deazaguanine + ADP + phosphate + H2O + H(+). The protein operates within purine metabolism; 7-cyano-7-deazaguanine biosynthesis. Its function is as follows. Catalyzes the ATP-dependent conversion of 7-carboxy-7-deazaguanine (CDG) to 7-cyano-7-deazaguanine (preQ(0)). The sequence is that of 7-cyano-7-deazaguanine synthase from Vibrio vulnificus (strain CMCP6).